The chain runs to 197 residues: FMN-dependent NADH:quinone oxidoreductase (197 aa).

Serine 10 is a binding site for FMN.

The protein belongs to the azoreductase type 1 family. As to quaternary structure, homodimer. FMN is required as a cofactor.

The catalysed reaction is 2 a quinone + NADH + H(+) = 2 a 1,4-benzosemiquinone + NAD(+). It carries out the reaction N,N-dimethyl-1,4-phenylenediamine + anthranilate + 2 NAD(+) = 2-(4-dimethylaminophenyl)diazenylbenzoate + 2 NADH + 2 H(+). Quinone reductase that provides resistance to thiol-specific stress caused by electrophilic quinones. Functionally, also exhibits azoreductase activity. Catalyzes the reductive cleavage of the azo bond in aromatic azo compounds to the corresponding amines. The protein is FMN-dependent NADH:quinone oxidoreductase of Mycoplasma genitalium (strain ATCC 33530 / DSM 19775 / NCTC 10195 / G37) (Mycoplasmoides genitalium).